Consider the following 446-residue polypeptide: Na(+)-translocating NADH-quinone reductase subunit A (446 aa).

This sequence belongs to the NqrA family. As to quaternary structure, composed of six subunits; NqrA, NqrB, NqrC, NqrD, NqrE and NqrF.

The enzyme catalyses a ubiquinone + n Na(+)(in) + NADH + H(+) = a ubiquinol + n Na(+)(out) + NAD(+). Its function is as follows. NQR complex catalyzes the reduction of ubiquinone-1 to ubiquinol by two successive reactions, coupled with the transport of Na(+) ions from the cytoplasm to the periplasm. NqrA to NqrE are probably involved in the second step, the conversion of ubisemiquinone to ubiquinol. The protein is Na(+)-translocating NADH-quinone reductase subunit A of Vibrio vulnificus (strain CMCP6).